The chain runs to 1740 residues: SH3 and multiple ankyrin repeat domains protein 3 (1740 aa).

The interval 1-75 (MDGPGASAVV…KFLDEERLLQ (75 aa)) is intramolecular interaction with the ANK repeats. Y122 carries the phosphotyrosine modification. 6 ANK repeats span residues 148 to 181 (SGEC…FRTR), 182 to 214 (DGLT…YKDS), 215 to 245 (RGLT…QLGT), 249 to 278 (NGWQ…NMGA), 282 to 311 (SGNT…NKDV), and 315 to 345 (NSQT…DVVP). Residues 354–466 (KRRRLAGPSG…PPPRGPKRKL (113 aa)) form a disordered region. Phosphoserine occurs at positions 373, 375, 387, and 394. Positions 404-415 (LQEEKDRDRDGE) are enriched in basic and acidic residues. The segment covering 444-460 (APGPGPASPAPPAPPPR) has biased composition (pro residues). The 60-residue stretch at 470-529 (VPGRKFIAVKAHSPQGEGEIPLHRGEAVKVLSIGEGGFWEGTVKGRTGWFPADCVEEVQM) folds into the SH3 domain. S482 carries the post-translational modification Phosphoserine. A Phosphotyrosine modification is found at Y555. Residues 570-664 (VAILQKRDHE…RLVMKVVSVT (95 aa)) form the PDZ domain. The disordered stretch occupies residues 664-687 (TRKPEEDSARRRAPPPPKRAPSTT). Residues 677–684 (PPPPKRAP) form a required for interaction with ABI1 region. Phosphoserine occurs at positions 694, 781, 790, and 801. Disordered regions lie at residues 759-855 (RQGL…RSSF), 868-1053 (AGLY…QPSR), 1115-1199 (AARE…MILS), 1211-1463 (LIVV…GPAR), and 1476-1518 (GDPV…EPVG). Positions 812–845 (IPPPPQTAPPPPPAPYYFDSGPPPTFSPPPPPPG) are enriched in pro residues. Phosphoserine is present on residues S891 and S898. T913 bears the Phosphothreonine mark. Y931 carries the post-translational modification Phosphotyrosine. R966 is subject to Asymmetric dimethylarginine. A compositionally biased stretch (basic and acidic residues) spans 1017–1027 (VKERRLEERRR). The segment covering 1123–1132 (SQTPSRSPTP) has biased composition (polar residues). T1131 is modified (phosphothreonine). A phosphoserine mark is found at S1135, S1160, S1164, and S1167. The segment covering 1175 to 1195 (ARREAEKPTREERKSPEDKKS) has biased composition (basic and acidic residues). At T1235 the chain carries Phosphothreonine. 2 stretches are compositionally biased toward pro residues: residues 1252-1262 (MPSPRAQPPGS) and 1322-1334 (TPPP…PTTV). A Phosphoserine modification is found at S1254. A compositionally biased stretch (low complexity) spans 1335–1344 (PSPASGKPSS). Over residues 1361-1371 (ADTRSSSDPHL) the composition is skewed to basic and acidic residues. Low complexity predominate over residues 1372–1393 (ETTSTISTVSSMSTLSSESGEL). The SH3-binding signature appears at 1411 to 1417 (PPVPPKP). The residue at position 1421 (S1421) is a Phosphoserine. The stretch at 1495 to 1515 (ISELSSRLQQLNKDTRSLGEE) forms a coiled coil. The span at 1496–1506 (SELSSRLQQLN) shows a compositional bias: polar residues. Residues S1511, S1522, S1530, and S1549 each carry the phosphoserine modification. 2 disordered regions span residues 1556-1594 (ISAQ…PASL) and 1637-1673 (VRSV…QQKP). Positions 1637-1647 (VRSVSARSRSP) are enriched in low complexity. Residues S1644, S1646, and S1648 each carry the phosphoserine modification. Over residues 1648-1658 (SPSPLPSPSPG) the composition is skewed to pro residues. A compositionally biased stretch (low complexity) spans 1659 to 1668 (SGPSAGPRRP). The SAM domain occupies 1677–1740 (WSKFDVGDWL…ERALRQLDGS (64 aa)).

It belongs to the SHANK family. May homomultimerize via its SAM domain. Interacts with BAIAP2, DBNL and SLC17A7/VGLUT1. Interacts with DLGAP1/GKAP, GRM1/MGLUR1, GRM5/MGLUR5 and LZTS3 C-termini via its PDZ domain. Interacts with ABI1, HOMER1, HOMER2, HOMER3 and CTTN/cortactin SH3 domain. Is part of a complex with DLG4/PSD-95 and DLGAP1/GKAP. Interacts (via PDZ domain) with the GRIA1 subunit of the AMPA receptor (via PDZ-binding motif). Interacts with WASF1 and CYFIP2; the interactions mediate the association of SHANK3 with the WAVE1 complex. Interacts with ARPC2; the interaction probably mediates the association of SHANK3 with the Arp2/3 complex. Interacts (via ANK repeats) with SHARPIN and SPTAN1. Interacts (via PDZ domain) with ARHGAP44 (probably via PDZ-binding motif); the interaction takes place in dendritic spines and promotes GRIA1 exocytosis. Interacts with CAMK2A. Interacts with DIP2A. Interacts with ADGRL3. In terms of tissue distribution, widely expressed in brain (at protein level).

The protein resides in the cytoplasm. Its subcellular location is the postsynaptic density. The protein localises to the cell projection. It is found in the dendritic spine. Major scaffold postsynaptic density protein which interacts with multiple proteins and complexes to orchestrate the dendritic spine and synapse formation, maturation and maintenance. Interconnects receptors of the postsynaptic membrane including NMDA-type and metabotropic glutamate receptors via complexes with GKAP/PSD-95 and HOMER, respectively, and the actin-based cytoskeleton. Plays a role in the structural and functional organization of the dendritic spine and synaptic junction through the interaction with Arp2/3 and WAVE1 complex as well as the promotion of the F-actin clusters. By way of this control of actin dynamics, participates in the regulation of developing neurons growth cone motility and the NMDA receptor-signaling. Also modulates GRIA1 exocytosis and GRM5/MGLUR5 expression and signaling to control the AMPA and metabotropic glutamate receptor-mediated synaptic transmission and plasticity. May be required at an early stage of synapse formation and be inhibited by IGF1 to promote synapse maturation. The sequence is that of SH3 and multiple ankyrin repeat domains protein 3 (Shank3) from Rattus norvegicus (Rat).